The following is a 498-amino-acid chain: Protein flp (498 aa).

Helical transmembrane passes span 6-26, 389-409, 433-453, and 471-491; these read LYFL…IYIT, FNIV…FSAY, LSLC…YLIL, and LALI…LLFL.

The protein resides in the cell membrane. In terms of biological role, its precise function is unknown. Has no penicillin-binding activity and is not involved in methicillin resistance. In Staphylococcus aureus (strain NCTC 8325 / PS 47), this protein is Protein flp (flp).